Here is a 79-residue protein sequence, read N- to C-terminus: uncharacterized protein (79 aa).

This is an uncharacterized protein from Acidianus two-tailed virus (ATV).